The chain runs to 773 residues: Probable C-mannosyltransferase DPY19L2 (773 aa).

Positions 1–45 (MVGPTRSKLREGSSDRPQSSCTGQARRRWSAATMEPQQERSAPQE) are disordered. Residues 1–122 (MVGPTRSKLR…ALQMHRFSHR (122 aa)) are Nuclear-facing. A helical transmembrane segment spans residues 123–143 (TLFGLAIFVGILHWLHLITLF). The Perinuclear space portion of the chain corresponds to 144 to 209 (ENDHHFSHLS…INTVKRFHLY (66 aa)). A helical membrane pass occupies residues 210–230 (PEVVIAYWYRTIIGIMNLFGI). Residues 231 to 256 (ETKTCWNVTRMEPLNEVQSCEGLGDP) lie on the Nuclear side of the membrane. The chain crosses the membrane as a helical span at residues 257–277 (ACFYIGVIFILNGLMMGLFFI). Over 278 to 311 (YSTYLSGSQLGGLITVACYFFNHGEATRVMWTPP) the chain is Perinuclear space. A helical transmembrane segment spans residues 312-332 (LRESFSYPFLVLQMYILTIIL). Topologically, residues 333 to 358 (RTSTVHKKHYMALCFSNVAFMLPWQF) are nuclear. The chain crosses the membrane as a helical span at residues 359-379 (AQFILFTQIASLFPMYVVGYI). Over 380 to 386 (EPSKFQK) the chain is Perinuclear space. Residues 387–407 (IIYVNMSSVALCFILMFGNSM) form a helical membrane-spanning segment. Over 408 to 437 (YLSSYYSSCLLVTWAIMQKKSKIQKLGGTE) the chain is Nuclear. Residues 438–458 (LQFWLIQGCFWWCGTIILKFL) form a helical membrane-spanning segment. Topologically, residues 459-507 (TSKICGVSDHIRLSDLIAARILRYTDFDTLIYTCAPEFDFMEQATPLRY) are perinuclear space. A helical transmembrane segment spans residues 508-528 (IKTLLLPLILVITYLIFKKIV). Over 529 to 548 (RDIMCVLYTNTYVRKQLLDN) the chain is Nuclear. A helical transmembrane segment spans residues 549-569 (AELIFHTLQLLAFTGLAILIM). Over 570–590 (RLKLFLTPHMCIMASLICSQR) the chain is Perinuclear space. The chain crosses the membrane as a helical span at residues 591-611 (LFGWLFCRIHFENVVFGILTM). The Nuclear segment spans residues 612–773 (MSIQGCANLH…NSMYRVLKIN (162 aa)).

It belongs to the dpy-19 family. In terms of assembly, interacts with FAM209. In terms of tissue distribution, predominantly expressed in testis. Present in testis but absent from epididymal sperm (at protein level).

It is found in the nucleus inner membrane. Its function is as follows. Probable C-mannosyltransferase that mediates C-mannosylation of tryptophan residues on target proteins. Functionally, required during spermatogenesis for sperm head elongation and acrosome formation. Also plays a role in acrosome attachment to the nuclear envelope. The protein is Probable C-mannosyltransferase DPY19L2 (Dpy19l2) of Mus musculus (Mouse).